The primary structure comprises 510 residues: MIDALYILIVALVIYKTAQFVHRKSLEKKHHCQPVKQIPLVSILSGLGFDMFFKDTAEMTKNGGLHKKLQQMLESLQTTTFRSRMLTGSQIVTMEPENERTMCSSAHMKDWTIGYRPFALKPLLGDGIFSSEGESWKHSRIMLRPIFAKEHIKQITAMEPYMLLLIEIIKSSSANEGPVDLQPLFHAFTIDYASDFLFGESCDVLKENLGGKSTSGMDAQVKRDFASVFNDVQNYLTKRMMLGPLAFLVSSKDFHDGIKKQHEFVSYFVQKAISMSDEELNDESKNYVFLYQLAKQTKDAKVLQDELLSILLAGRNTTASLLSFLFFELSHHENVWTTLKEVVDQSFPDVESITFETIQNCDYLRWCLFESLRVNPSVPFNSRTANKDTILPRGGGEDCSHPILVKKGDQVLFPLYASNRQEKYFGRKPEEFIPERWRDLPKTGGPAFMPFSTGPRMCLGQQFALIEASYVTIRLVQTFSKLKSHSLEYAPKRLVAATIRLIDGCFVSFE.

Cys458 serves as a coordination point for heme.

The protein belongs to the cytochrome P450 family. Requires heme as cofactor.

It is found in the membrane. Together with an NADPH cytochrome P450 the enzyme system catalyzes the terminal hydroxylation as the first step in the assimilation of alkanes and fatty acids. The chain is Cytochrome P450 52C2 (CYP52C2) from Candida maltosa (Yeast).